The primary structure comprises 425 residues: tRNA(Ile)-lysidine synthase (425 aa).

Residue 27 to 32 (SGGLDS) coordinates ATP.

The protein belongs to the tRNA(Ile)-lysidine synthase family.

The protein localises to the cytoplasm. It catalyses the reaction cytidine(34) in tRNA(Ile2) + L-lysine + ATP = lysidine(34) in tRNA(Ile2) + AMP + diphosphate + H(+). Functionally, ligates lysine onto the cytidine present at position 34 of the AUA codon-specific tRNA(Ile) that contains the anticodon CAU, in an ATP-dependent manner. Cytidine is converted to lysidine, thus changing the amino acid specificity of the tRNA from methionine to isoleucine. This Streptococcus pneumoniae (strain 70585) protein is tRNA(Ile)-lysidine synthase.